Reading from the N-terminus, the 517-residue chain is ATP synthase subunit beta (517 aa).

Low complexity-rich tracts occupy residues 1 to 22 (MAKA…AAKA) and 29 to 42 (AKTA…APKA). Positions 1–42 (MAKAATPKTTAAAEAKPAAAKAPAKKAPAKTAAAKSDAAPKA) are disordered. An ATP-binding site is contributed by 195 to 202 (GGAGVGKT).

Belongs to the ATPase alpha/beta chains family. As to quaternary structure, F-type ATPases have 2 components, CF(1) - the catalytic core - and CF(0) - the membrane proton channel. CF(1) has five subunits: alpha(3), beta(3), gamma(1), delta(1), epsilon(1). CF(0) has three main subunits: a(1), b(2) and c(9-12). The alpha and beta chains form an alternating ring which encloses part of the gamma chain. CF(1) is attached to CF(0) by a central stalk formed by the gamma and epsilon chains, while a peripheral stalk is formed by the delta and b chains.

It is found in the cell inner membrane. It catalyses the reaction ATP + H2O + 4 H(+)(in) = ADP + phosphate + 5 H(+)(out). Produces ATP from ADP in the presence of a proton gradient across the membrane. The catalytic sites are hosted primarily by the beta subunits. The protein is ATP synthase subunit beta of Brucella anthropi (strain ATCC 49188 / DSM 6882 / CCUG 24695 / JCM 21032 / LMG 3331 / NBRC 15819 / NCTC 12168 / Alc 37) (Ochrobactrum anthropi).